Reading from the N-terminus, the 217-residue chain is Proteasome subunit beta type-6-A like protein (217 aa).

Residues 1-16 (MERHLMDSQIKGVSTG) constitute a propeptide, removed in mature form. Catalysis depends on Thr-17, which acts as the Nucleophile.

It belongs to the peptidase T1B family. As to quaternary structure, the 26S proteasome consists of a 20S proteasome core and two 19S regulatory subunits. The 20S proteasome core is composed of 28 subunits that are arranged in four stacked rings, resulting in a barrel-shaped structure. The two end rings are each formed by seven alpha subunits, and the two central rings are each formed by seven beta subunits. The catalytic chamber with the active sites is on the inside of the barrel.

The protein resides in the cytoplasm. The protein localises to the nucleus. It carries out the reaction Cleavage of peptide bonds with very broad specificity.. Functionally, the proteasome is a multicatalytic proteinase complex which is characterized by its ability to cleave peptides with Arg, Phe, Tyr, Leu, and Glu adjacent to the leaving group at neutral or slightly basic pH. The proteasome has an ATP-dependent proteolytic activity. This subunit is involved in antigen processing to generate class I binding peptides. The protein is Proteasome subunit beta type-6-A like protein (psmb6l-a) of Salmo salar (Atlantic salmon).